Consider the following 632-residue polypeptide: MTASATSTEGQEAASTSGFWGLTLGSIGVVFGDIGTSPLYAFREAAHGAAHGEPVSRMIVLGVLSLILWSLFIVVTAKYVLLLLRADNNGEGGTLSLMALGQRALGRRSMFLMSLGVIGASMFIGDSMITPAISVLSAVEGLKLAAPALEHYVVPLTVFILVVLFAVQSKGTARVATAFGPVMVLWFASLAVMGIVHITDDPSVLAAINPYYAVQFLLSHGTIGLVTLGAVFLAVTGGEALYADLGHFGRKPIQSAWLFFVLPSLLINYFGQGALVLSDPAAIENSFYRMVPELLLLPLVVLATAATVIASQAVITGAYSLVSQAVQLGLLPRFEVRYTSESHAGQIYLPRVNRLLLIGVMLLVLLFRTSSNLASAYGIAVSTTMVADGIMGFVVIWKLWNLRAAVAAAIIVPFVIVDLSFFSANLLKLFEGAWVPLLFGAAMAVTIWTWRRGSAILVLKTRKIEVPLDDLIGSLEKRPPHIVKGTAVFLTSDPTSVPTALLHNLKHNKVLHEHNVILTIETAQTPRVDVSERVRMEKISEKFSKVRLRFGFMESPNVPRALAVARKLGWQFDIMSTSFFVSRRSLKPSSQSGMPSWQDHLFIALSRSANDATDYFQIPTGRVVEVGTQVTI.

12 helical membrane-spanning segments follow: residues 19-39 (FWGL…TSPL), 58-78 (MIVL…VTAK), 110-130 (MFLM…SMIT), 147-167 (PALE…LFAV), 178-198 (AFGP…IVHI), 216-236 (FLLS…LAVT), 257-277 (WLFF…ALVL), 290-310 (MVPE…TVIA), 347-367 (IYLP…VLLF), 377-397 (YGIA…VVIW), 404-424 (AAVA…FFSA), and 429-449 (LFEG…TIWT).

The protein belongs to the HAK/KUP transporter (TC 2.A.72) family.

It localises to the cell inner membrane. The catalysed reaction is K(+)(in) + H(+)(in) = K(+)(out) + H(+)(out). Transport of potassium into the cell. Likely operates as a K(+):H(+) symporter. In Bradyrhizobium sp. (strain BTAi1 / ATCC BAA-1182), this protein is Probable potassium transport system protein Kup 2.